A 521-amino-acid chain; its full sequence is Cholesterol side-chain cleavage enzyme, mitochondrial (521 aa).

The N-terminal 39 residues, 1–39 (MLAKGLPPRSVLVKGCQTFLSAPKERLGHLRVPTSEGAG), are a transit peptide targeting the mitochondrion. Position 462 (cysteine 462) interacts with heme.

It belongs to the cytochrome P450 family. Interacts with FDX1/adrenodoxin. The cofactor is heme.

Its subcellular location is the mitochondrion inner membrane. It carries out the reaction 6 reduced [adrenodoxin] + cholesterol + 3 O2 + 6 H(+) = 4-methylpentanal + pregnenolone + 6 oxidized [adrenodoxin] + 4 H2O. It catalyses the reaction 2 reduced [adrenodoxin] + cholesterol + O2 + 2 H(+) = (22R)-hydroxycholesterol + 2 oxidized [adrenodoxin] + H2O. The enzyme catalyses (22R)-hydroxycholesterol + 2 reduced [adrenodoxin] + O2 + 2 H(+) = (20R,22R)-20,22-dihydroxycholesterol + 2 oxidized [adrenodoxin] + H2O. The catalysed reaction is (20R,22R)-20,22-dihydroxycholesterol + 2 reduced [adrenodoxin] + O2 + 2 H(+) = 4-methylpentanal + pregnenolone + 2 oxidized [adrenodoxin] + 2 H2O. Its pathway is lipid metabolism; C21-steroid hormone metabolism. The protein operates within steroid metabolism; cholesterol metabolism. Its function is as follows. A cytochrome P450 monooxygenase that catalyzes the side-chain hydroxylation and cleavage of cholesterol to pregnenolone, the precursor of most steroid hormones. Catalyzes three sequential oxidation reactions of cholesterol, namely the hydroxylation at C22 followed with the hydroxylation at C20 to yield 20R,22R-hydroxycholesterol that is further cleaved between C20 and C22 to yield the C21-steroid pregnenolone and 4-methylpentanal. Mechanistically, uses molecular oxygen inserting one oxygen atom into a substrate and reducing the second into a water molecule. Two electrons are provided by NADPH via a two-protein mitochondrial transfer system comprising flavoprotein FDXR (adrenodoxin/ferredoxin reductase) and nonheme iron-sulfur protein FDX1 or FDX2 (adrenodoxin/ferredoxin). The chain is Cholesterol side-chain cleavage enzyme, mitochondrial (CYP11A1) from Macaca fascicularis (Crab-eating macaque).